We begin with the raw amino-acid sequence, 100 residues long: NAD(P)H-quinone oxidoreductase subunit 4L, chloroplastic (100 aa).

3 consecutive transmembrane segments (helical) span residues 1–21, 29–49, and 63–83; these read MLEH…YGLI, ALMC…TFSN, and IFVT…ALAI.

Belongs to the complex I subunit 4L family. In terms of assembly, NDH is composed of at least 16 different subunits, 5 of which are encoded in the nucleus.

It is found in the plastid. It localises to the chloroplast thylakoid membrane. It carries out the reaction a plastoquinone + NADH + (n+1) H(+)(in) = a plastoquinol + NAD(+) + n H(+)(out). The catalysed reaction is a plastoquinone + NADPH + (n+1) H(+)(in) = a plastoquinol + NADP(+) + n H(+)(out). Functionally, NDH shuttles electrons from NAD(P)H:plastoquinone, via FMN and iron-sulfur (Fe-S) centers, to quinones in the photosynthetic chain and possibly in a chloroplast respiratory chain. The immediate electron acceptor for the enzyme in this species is believed to be plastoquinone. Couples the redox reaction to proton translocation, and thus conserves the redox energy in a proton gradient. The protein is NAD(P)H-quinone oxidoreductase subunit 4L, chloroplastic of Cycas taitungensis (Prince sago).